The following is a 297-amino-acid chain: tRNA pseudouridine synthase B (297 aa).

Residue aspartate 44 is the Nucleophile of the active site.

The protein belongs to the pseudouridine synthase TruB family. Type 1 subfamily.

The enzyme catalyses uridine(55) in tRNA = pseudouridine(55) in tRNA. Responsible for synthesis of pseudouridine from uracil-55 in the psi GC loop of transfer RNAs. This Corynebacterium glutamicum (strain ATCC 13032 / DSM 20300 / JCM 1318 / BCRC 11384 / CCUG 27702 / LMG 3730 / NBRC 12168 / NCIMB 10025 / NRRL B-2784 / 534) protein is tRNA pseudouridine synthase B.